A 295-amino-acid polypeptide reads, in one-letter code: Acetylglutamate kinase (295 aa).

Substrate-binding positions include 61 to 62 (GG), Arg83, and Asn182.

Belongs to the acetylglutamate kinase family. ArgB subfamily.

It localises to the cytoplasm. It catalyses the reaction N-acetyl-L-glutamate + ATP = N-acetyl-L-glutamyl 5-phosphate + ADP. The protein operates within amino-acid biosynthesis; L-arginine biosynthesis; N(2)-acetyl-L-ornithine from L-glutamate: step 2/4. Its function is as follows. Catalyzes the ATP-dependent phosphorylation of N-acetyl-L-glutamate. In Clostridium acetobutylicum (strain ATCC 824 / DSM 792 / JCM 1419 / IAM 19013 / LMG 5710 / NBRC 13948 / NRRL B-527 / VKM B-1787 / 2291 / W), this protein is Acetylglutamate kinase.